A 268-amino-acid polypeptide reads, in one-letter code: Imidazole glycerol phosphate synthase subunit HisF (268 aa).

Residues Asp-12 and Asp-131 contribute to the active site.

The protein belongs to the HisA/HisF family. Heterodimer of HisH and HisF.

The protein resides in the cytoplasm. The catalysed reaction is 5-[(5-phospho-1-deoxy-D-ribulos-1-ylimino)methylamino]-1-(5-phospho-beta-D-ribosyl)imidazole-4-carboxamide + L-glutamine = D-erythro-1-(imidazol-4-yl)glycerol 3-phosphate + 5-amino-1-(5-phospho-beta-D-ribosyl)imidazole-4-carboxamide + L-glutamate + H(+). It participates in amino-acid biosynthesis; L-histidine biosynthesis; L-histidine from 5-phospho-alpha-D-ribose 1-diphosphate: step 5/9. IGPS catalyzes the conversion of PRFAR and glutamine to IGP, AICAR and glutamate. The HisF subunit catalyzes the cyclization activity that produces IGP and AICAR from PRFAR using the ammonia provided by the HisH subunit. This is Imidazole glycerol phosphate synthase subunit HisF from Methanoculleus marisnigri (strain ATCC 35101 / DSM 1498 / JR1).